The primary structure comprises 89 residues: Small ribosomal subunit protein uS15 (89 aa).

Belongs to the universal ribosomal protein uS15 family. As to quaternary structure, part of the 30S ribosomal subunit. Forms a bridge to the 50S subunit in the 70S ribosome, contacting the 23S rRNA.

In terms of biological role, one of the primary rRNA binding proteins, it binds directly to 16S rRNA where it helps nucleate assembly of the platform of the 30S subunit by binding and bridging several RNA helices of the 16S rRNA. Functionally, forms an intersubunit bridge (bridge B4) with the 23S rRNA of the 50S subunit in the ribosome. The protein is Small ribosomal subunit protein uS15 of Streptococcus suis (strain 98HAH33).